A 329-amino-acid polypeptide reads, in one-letter code: Transcription factor RAX1 (329 aa).

2 consecutive HTH myb-type domains span residues 9–62 and 63–117; these read KTKV…LNYL and RPNI…RKKL. 2 DNA-binding regions (H-T-H motif) span residues 38-62 and 90-113; these read WISF…LNYL and WSII…NTKL. Low complexity-rich tracts occupy residues 122-131 and 144-154; these read SDSSSSAMAS and PTSPTTIPSSS. The segment at 122–162 is disordered; that stretch reads SDSSSSAMASPYLNPISQDVKRPTSPTTIPSSSYNPYAENP.

In terms of tissue distribution, mostly expressed in roots. Also present in shoot tips and flower buds.

It is found in the nucleus. Transcription activator of genes involved in the regulation of meristematic competence, such as CUC2. Positively regulates axillary meristems (AMs) formation and development, especially at early phases of vegetative growth, probably by specifying a stem cell niche for AM formation. Modulates the negative regulation mediated by gibberellic acid on the timing of developmental phase transitions. The protein is Transcription factor RAX1 (RAX1) of Arabidopsis thaliana (Mouse-ear cress).